The primary structure comprises 969 residues: Chromosome transmission fidelity protein 18 homolog (969 aa).

The interval 30–97 (EGTRDQAPPG…APSSPMVKRP (68 aa)) is disordered. A Phosphothreonine modification is found at T51. Phosphoserine is present on S221. 2 disordered regions span residues 250 to 269 (SEGE…APGQ) and 318 to 340 (RKPR…GKWK). Over residues 257-268 (LEGPPAEEPAPG) the composition is skewed to low complexity. 369 to 376 (GPPGLGKT) contributes to the ATP binding site. The disordered stretch occupies residues 856–889 (ARSGPQVDQGSSGPASLWTDSGEKGTRQPAPRNH). Residues 876–889 (SGEKGTRQPAPRNH) show a composition bias toward basic and acidic residues.

The protein belongs to the activator 1 small subunits family. CTF18 subfamily. As to quaternary structure, component of the CTF18-RFC complex, which consists of CTF18, CTF8, DCC1, RFC2, RFC3, RFC4 and RFC5. During assembly of the CTF18-RFC complex, CTF18 may first assemble into a subcomplex with RFC2, RFC3, RFC4 and RFC5. CTF18 then interacts directly with CTF8, which in turn interacts with DCC1. The CTF18-RFC complex associates with PCNA and with DNA polymerase POLH. The CTF18-RFC complex does not interact with the Rad9/Rad1/Hus1 complex. CTF18 interacts with SMC1A and RAD21. Interacts with DDX11.

Its subcellular location is the nucleus. Chromosome cohesion factor involved in sister chromatid cohesion and fidelity of chromosome transmission. Component of one of the cell nuclear antigen loader complexes, CTF18-replication factor C (CTF18-RFC), which consists of CTF18, CTF8, DCC1, RFC2, RFC3, RFC4 and RFC5. The CTF18-RFC complex binds to single-stranded and primed DNAs and has weak ATPase activity that is stimulated by the presence of primed DNA, replication protein A (RPA) and by proliferating cell nuclear antigen (PCNA). The CTF18-RFC complex catalyzes the ATP-dependent loading of PCNA onto primed and gapped DNA. Interacts with and stimulates DNA polymerase POLH. During DNA repair synthesis, involved in loading DNA polymerase POLE at the sites of local damage. The protein is Chromosome transmission fidelity protein 18 homolog (Chtf18) of Mus musculus (Mouse).